The chain runs to 115 residues: T cell receptor beta variable 2 (115 aa).

A signal peptide spans 1 to 19 (MDTWLVCWAIFSLLKAGLT). An Ig-like domain is found at 21–115 (PEVTQTPSHQ…SAMYFCASSE (95 aa)). Cys42 and Cys111 are oxidised to a cystine. Asn93 is a glycosylation site (N-linked (GlcNAc...) asparagine).

As to quaternary structure, alpha-beta TR is a heterodimer composed of an alpha and beta chain; disulfide-linked. The alpha-beta TR is associated with the transmembrane signaling CD3 coreceptor proteins to form the TR-CD3 (TcR or TCR). The assembly of alpha-beta TR heterodimers with CD3 occurs in the endoplasmic reticulum where a single alpha-beta TR heterodimer associates with one CD3D-CD3E heterodimer, one CD3G-CD3E heterodimer and one CD247 homodimer forming a stable octameric structure. CD3D-CD3E and CD3G-CD3E heterodimers preferentially associate with TR alpha and TR beta chains, respectively. The association of the CD247 homodimer is the last step of TcR assembly in the endoplasmic reticulum and is required for transport to the cell surface.

The protein resides in the cell membrane. V region of the variable domain of T cell receptor (TR) beta chain that participates in the antigen recognition. Alpha-beta T cell receptors are antigen specific receptors which are essential to the immune response and are present on the cell surface of T lymphocytes. Recognize peptide-major histocompatibility (MH) (pMH) complexes that are displayed by antigen presenting cells (APC), a prerequisite for efficient T cell adaptive immunity against pathogens. Binding of alpha-beta TR to pMH complex initiates TR-CD3 clustering on the cell surface and intracellular activation of LCK that phosphorylates the ITAM motifs of CD3G, CD3D, CD3E and CD247 enabling the recruitment of ZAP70. In turn ZAP70 phosphorylates LAT, which recruits numerous signaling molecules to form the LAT signalosome. The LAT signalosome propagates signal branching to three major signaling pathways, the calcium, the mitogen-activated protein kinase (MAPK) kinase and the nuclear factor NF-kappa-B (NF-kB) pathways, leading to the mobilization of transcription factors that are critical for gene expression and essential for T cell growth and differentiation. The T cell repertoire is generated in the thymus, by V-(D)-J rearrangement. This repertoire is then shaped by intrathymic selection events to generate a peripheral T cell pool of self-MH restricted, non-autoaggressive T cells. Post-thymic interaction of alpha-beta TR with the pMH complexes shapes TR structural and functional avidity. The sequence is that of T cell receptor beta variable 2 from Homo sapiens (Human).